A 364-amino-acid polypeptide reads, in one-letter code: Uroporphyrinogen decarboxylase (364 aa).

Residues 49 to 53 (RQAGR), aspartate 98, tyrosine 173, serine 228, and histidine 341 each bind substrate.

The protein belongs to the uroporphyrinogen decarboxylase family. Homodimer.

It localises to the cytoplasm. The catalysed reaction is uroporphyrinogen III + 4 H(+) = coproporphyrinogen III + 4 CO2. It participates in porphyrin-containing compound metabolism; protoporphyrin-IX biosynthesis; coproporphyrinogen-III from 5-aminolevulinate: step 4/4. Functionally, catalyzes the decarboxylation of four acetate groups of uroporphyrinogen-III to yield coproporphyrinogen-III. This Protochlamydia amoebophila (strain UWE25) protein is Uroporphyrinogen decarboxylase.